Consider the following 81-residue polypeptide: D-alanyl carrier protein (81 aa).

One can recognise a Carrier domain in the interval 1-81; sequence MADEAIKNGV…KIIAKVEQAQ (81 aa). At serine 39 the chain carries O-(pantetheine 4'-phosphoryl)serine.

The protein belongs to the DltC family. 4'-phosphopantetheine is transferred from CoA to a specific serine of apo-DCP.

It is found in the cytoplasm. It participates in cell wall biogenesis; lipoteichoic acid biosynthesis. In terms of biological role, carrier protein involved in the D-alanylation of lipoteichoic acid (LTA). The loading of thioester-linked D-alanine onto DltC is catalyzed by D-alanine--D-alanyl carrier protein ligase DltA. The DltC-carried D-alanyl group is further transferred to cell membrane phosphatidylglycerol (PG) by forming an ester bond, probably catalyzed by DltD. D-alanylation of LTA plays an important role in modulating the properties of the cell wall in Gram-positive bacteria, influencing the net charge of the cell wall. In Lacticaseibacillus rhamnosus (Lactobacillus rhamnosus), this protein is D-alanyl carrier protein.